Here is a 1687-residue protein sequence, read N- to C-terminus: A-kinase anchor protein 12 (1687 aa).

Residues 1 to 108 (MGAGSSTEQR…EKDRVEEMAA (108 aa)) form a disordered region. The N-myristoyl glycine moiety is linked to residue G2. 4 positions are modified to phosphoserine: S11, S18, S22, and S27. Over residues 30 to 48 (GPAAEASGAAGDPADADPA) the composition is skewed to low complexity. A compositionally biased stretch (polar residues) spans 52–62 (PQKNGQLSTVN). Over residues 75 to 88 (ENQEGQEEEVVDED) the composition is skewed to acidic residues. Residues 89–105 (VGQRESEDVREKDRVEE) show a composition bias toward basic and acidic residues. Phosphoserine occurs at positions 136 and 204. Disordered regions lie at residues 175-282 (SDTV…ETTS) and 298-355 (KTSF…DYEK). Residues 213-230 (ASKESELKQSTEKQEGTL) are compositionally biased toward basic and acidic residues. Residues S235 and S245 each carry the phosphoserine modification. Residues 247–259 (QAAEEEAKDEGEE) are compositionally biased toward acidic residues. Positions 254-544 (KDEGEEKQEK…QHIHTESPES (291 aa)) are involved in PKC-binding. 4 positions are modified to phosphoserine: S268, S271, S274, and S304. Over residues 268–282 (SPESPSSPVSSETTS) the composition is skewed to low complexity. Over residues 303-321 (KSKEDDLETAEKRKEQEAE) the composition is skewed to basic and acidic residues. A Phosphothreonine modification is found at T331. Residues 334-344 (ASEEQEPAEDT) are compositionally biased toward acidic residues. Residues S335 and S350 each carry the phosphoserine modification. The residue at position 353 (Y353) is a Phosphotyrosine. Position 371 is a phosphoserine (S371). Positions 402-481 (VEKTEEEQGG…EKTLPKHPEG (80 aa)) are disordered. Low complexity predominate over residues 417–426 (GGVVVEGTGE). S469 is modified (phosphoserine). Residues 470-480 (PEEKTLPKHPE) show a composition bias toward basic and acidic residues. Phosphoserine is present on residues S491, S507, and S509. A disordered region spans residues 496-828 (KVQGSPLKKL…INEDDPDVPA (333 aa)). The segment covering 499 to 513 (GSPLKKLFSSSGLKK) has biased composition (low complexity). The span at 514–523 (LSGKKQKGKR) shows a compositional bias: basic residues. Residues 533–550 (EYQHIHTESPESADEQKG) are compositionally biased toward basic and acidic residues. S541, S544, S585, S599, S614, and S616 each carry phosphoserine. The AKAP CaM-binding 1 motif lies at 594-614 (ITPWASFKKMVTPKKRVRRPS). Positions 612 to 626 (RPSESDKEEELEKVK) are enriched in basic and acidic residues. Residues 628-639 (ATLSSTDSTVSE) show a composition bias toward polar residues. At T629 the chain carries Phosphothreonine. 4 positions are modified to phosphoserine: S631, S632, S635, and S638. The segment covering 642 to 661 (DEVKTVGEEQKPEEPKRRVD) has biased composition (basic and acidic residues). 3 positions are modified to phosphoserine: S683, S684, and S685. A compositionally biased stretch (basic and acidic residues) spans 697–711 (DSHRAEEASKDKEAG). Polar residues predominate over residues 717-726 (ASTQEQDQAQ). Over residues 727-744 (GSSSPEPAGSPSEGEGVS) the composition is skewed to low complexity. S736, S748, S770, S771, and S789 each carry phosphoserine. An AKAP CaM-binding 2 motif is present at residues 743–763 (VSTWESFKRLVTPRKKSKSKL). The AKAP CaM-binding 3 signature appears at 784–804 (EESWVSIKKFIPGRRKKRADG). Phosphothreonine is present on T871. S873 is modified (phosphoserine). A disordered region spans residues 959-981 (ETSEALRTEEVTEASGAEETTDM). A Glycyl lysine isopeptide (Lys-Gly) (interchain with G-Cter in SUMO1) cross-link involves residue K1030. Over residues 1035-1045 (VPATQTVQRTG) the composition is skewed to polar residues. Disordered regions lie at residues 1035-1105 (VPAT…EVTA), 1125-1221 (AVAP…LAAA), 1277-1361 (CQEK…QDKA), and 1443-1487 (TPAP…TAIE). S1059 is modified (phosphoserine). Residues 1130-1157 (SSETLTDSETNGSTPLADSDTADGTQQD) show a composition bias toward polar residues. A compositionally biased stretch (basic and acidic residues) spans 1199-1211 (QEEHGEEPGRDVL). The residue at position 1289 (S1289) is a Phosphoserine. A compositionally biased stretch (basic and acidic residues) spans 1298–1310 (DVEKEKRETKPEQ). Phosphoserine is present on residues S1348, S1352, and S1354. Residues 1462 to 1487 (QRERSEEEDKPDAGPDADGKESTAIE) are compositionally biased toward basic and acidic residues. The RII-binding stretch occupies residues 1498 to 1511 (ELESKSNKIVLNVI). 2 disordered regions span residues 1522 to 1582 (ETAP…GSAS) and 1599 to 1687 (IEKL…LAES). The span at 1530–1547 (YDSQTQVPAMQADSQGAQ) shows a compositional bias: polar residues. A phosphoserine mark is found at S1543 and S1571. Residues 1618–1630 (QLQSLAQAEASAS) show a composition bias toward low complexity. S1637 is modified (phosphoserine). Basic and acidic residues predominate over residues 1645 to 1687 (LTEEGDAPKVEVQEEEMSTKSVKENKAQAEEDLQEPKGDLAES).

As to quaternary structure, binds to dimeric RII-alpha regulatory subunit of PKC. In terms of processing, phosphorylated by PKC (in vitro).

It is found in the cytoplasm. Its subcellular location is the cytoskeleton. The protein resides in the membrane. Anchoring protein that mediates the subcellular compartmentation of protein kinase A (PKA) and protein kinase C (PKC). The protein is A-kinase anchor protein 12 (Akap12) of Rattus norvegicus (Rat).